We begin with the raw amino-acid sequence, 498 residues long: Glycerol kinase (498 aa).

Residue T12 participates in ADP binding. ATP is bound by residues T12, T13, and S14. T12 is a sn-glycerol 3-phosphate binding site. R16 serves as a coordination point for ADP. The sn-glycerol 3-phosphate site is built by R82, E83, Y134, and D243. R82, E83, Y134, D243, and Q244 together coordinate glycerol. Residues T265 and G308 each coordinate ADP. Residues T265, G308, Q312, and G411 each coordinate ATP. Residue G411 coordinates ADP.

This sequence belongs to the FGGY kinase family.

It carries out the reaction glycerol + ATP = sn-glycerol 3-phosphate + ADP + H(+). Its pathway is polyol metabolism; glycerol degradation via glycerol kinase pathway; sn-glycerol 3-phosphate from glycerol: step 1/1. With respect to regulation, inhibited by fructose 1,6-bisphosphate (FBP). Key enzyme in the regulation of glycerol uptake and metabolism. Catalyzes the phosphorylation of glycerol to yield sn-glycerol 3-phosphate. This Brucella suis biovar 1 (strain 1330) protein is Glycerol kinase.